Consider the following 385-residue polypeptide: Glucans biosynthesis protein C (385 aa).

Transmembrane regions (helical) follow at residues 17-37, 60-80, 91-111, 137-157, 173-193, 212-232, 245-262, 274-294, 311-331, and 338-358; these read AWLMLLGIPFHISLIYSSHTW, MQVFFVISGYFSYMLFLRYPL, VGIPMLTAIPLLTLPQFIMLQ, ISHLWFLLVLVVMTTLCVWIF, KFSMVKLSVIFLCLGIGYAVI, FIVMQTLFYLPFFILGALAFI, RGSTLAAALAFVAYLLNQ, TESVITMVLGLWMVNVVFSFG, ASLFIYLVHHPLTLFFGAYIT, and WLGFLCGLIFVVGIAIILYEI.

This sequence belongs to the acyltransferase 3 family. OpgC subfamily.

The protein localises to the cell membrane. It participates in glycan metabolism; osmoregulated periplasmic glucan (OPG) biosynthesis. Its function is as follows. Necessary for the succinyl substitution of periplasmic glucans. Could catalyze the transfer of succinyl residues from the cytoplasmic side of the membrane to the nascent glucan backbones on the periplasmic side of the membrane. The sequence is that of Glucans biosynthesis protein C from Escherichia coli O81 (strain ED1a).